A 975-amino-acid polypeptide reads, in one-letter code: Kinesin-like protein KIN-14K (975 aa).

The disordered stretch occupies residues 1-40; the sequence is MKNRIKKGSSMIGVYGRSDGSSSIQSSNGSESRESIDDNK. Low complexity predominate over residues 17–30; that stretch reads RSDGSSSIQSSNGS. The segment covering 31 to 40 has biased composition (basic and acidic residues); it reads ESRESIDDNK. The Calponin-homology (CH) domain maps to 40–143; the sequence is KQGHQSLVEW…SLKALKASFS (104 aa). Residues 289–345 are a coiled coil; sequence KERSNAELSKLKQELEIVKETHEKQFLELKLNAQKAKVELERQVKNSELRVVEAKEL. Residues 436-746 form the Kinesin motor domain; it reads NIRVYCRIRP…LKFAERVSGV (311 aa). Position 520–527 (520–527) interacts with ATP; the sequence is GQTGSGKT. Residues 757-788 are a coiled coil; the sequence is GRDVRQLMEQVSNLKDMIAKKDEELQKFQNIN. Disordered stretches follow at residues 801–852 and 900–975; these read VSPP…GAKD and LFPE…NRKR. Residues 944 to 958 are compositionally biased toward low complexity; it reads LSISTTSSKALTSSK.

The protein belongs to the TRAFAC class myosin-kinesin ATPase superfamily. Kinesin family. KIN-14 subfamily.

This chain is Kinesin-like protein KIN-14K, found in Arabidopsis thaliana (Mouse-ear cress).